Here is a 250-residue protein sequence, read N- to C-terminus: Ribosomal RNA small subunit methyltransferase J (250 aa).

S-adenosyl-L-methionine contacts are provided by residues 101–102 (RD), 117–118 (ER), 153–154 (SS), and Asp-171.

The protein belongs to the methyltransferase superfamily. RsmJ family.

It is found in the cytoplasm. The enzyme catalyses guanosine(1516) in 16S rRNA + S-adenosyl-L-methionine = N(2)-methylguanosine(1516) in 16S rRNA + S-adenosyl-L-homocysteine + H(+). Functionally, specifically methylates the guanosine in position 1516 of 16S rRNA. This Shigella dysenteriae serotype 1 (strain Sd197) protein is Ribosomal RNA small subunit methyltransferase J.